Reading from the N-terminus, the 554-residue chain is 2-succinyl-5-enolpyruvyl-6-hydroxy-3-cyclohexene-1-carboxylate synthase (554 aa).

The protein belongs to the TPP enzyme family. MenD subfamily. As to quaternary structure, homodimer. Requires Mg(2+) as cofactor. It depends on Mn(2+) as a cofactor. Thiamine diphosphate is required as a cofactor.

The enzyme catalyses isochorismate + 2-oxoglutarate + H(+) = 5-enolpyruvoyl-6-hydroxy-2-succinyl-cyclohex-3-ene-1-carboxylate + CO2. It functions in the pathway quinol/quinone metabolism; 1,4-dihydroxy-2-naphthoate biosynthesis; 1,4-dihydroxy-2-naphthoate from chorismate: step 2/7. It participates in quinol/quinone metabolism; menaquinone biosynthesis. Its function is as follows. Catalyzes the thiamine diphosphate-dependent decarboxylation of 2-oxoglutarate and the subsequent addition of the resulting succinic semialdehyde-thiamine pyrophosphate anion to isochorismate to yield 2-succinyl-5-enolpyruvyl-6-hydroxy-3-cyclohexene-1-carboxylate (SEPHCHC). The sequence is that of 2-succinyl-5-enolpyruvyl-6-hydroxy-3-cyclohexene-1-carboxylate synthase from Flavobacterium johnsoniae (strain ATCC 17061 / DSM 2064 / JCM 8514 / BCRC 14874 / CCUG 350202 / NBRC 14942 / NCIMB 11054 / UW101) (Cytophaga johnsonae).